A 288-amino-acid polypeptide reads, in one-letter code: Homoserine kinase (288 aa).

79–89 (PPARGLGSSSA) serves as a coordination point for ATP.

Belongs to the GHMP kinase family. Homoserine kinase subfamily.

Its subcellular location is the cytoplasm. It catalyses the reaction L-homoserine + ATP = O-phospho-L-homoserine + ADP + H(+). It participates in amino-acid biosynthesis; L-threonine biosynthesis; L-threonine from L-aspartate: step 4/5. In terms of biological role, catalyzes the ATP-dependent phosphorylation of L-homoserine to L-homoserine phosphate. This Listeria monocytogenes serotype 4a (strain HCC23) protein is Homoserine kinase.